Consider the following 255-residue polypeptide: Zinc import ATP-binding protein ZnuC (255 aa).

Residues Val-5–Arg-220 form the ABC transporter domain.

It belongs to the ABC transporter superfamily. Zinc importer (TC 3.A.1.15.5) family. The complex is composed of two ATP-binding proteins (ZnuC), two transmembrane proteins (ZnuB) and a solute-binding protein (ZnuA).

It is found in the cell inner membrane. It catalyses the reaction Zn(2+)(out) + ATP(in) + H2O(in) = Zn(2+)(in) + ADP(in) + phosphate(in) + H(+)(in). Part of the ABC transporter complex ZnuABC involved in zinc import. Responsible for energy coupling to the transport system. This chain is Zinc import ATP-binding protein ZnuC, found in Sodalis glossinidius (strain morsitans).